The chain runs to 303 residues: MLARRRFLQFSGAAVASSLALPLLARAAGKTAASAPTDAALTAATDFAALEKAVRGRFGVTLLDTASGRRIGHRQDERFPMCSTFKSVLAATVLSQAERQPALLDTRVPVRDADLLSHAPVTRRHAGKDMTVRDLCRATIITSDNTAANLLFGVVGGPPAVTAFLRSIGDAVSRTDRLEPELNSFAKGDPRDTTTPAAMAATLQRVVLGEVLQLASRQQLADWLIDNETGDACLRAGLGKLWRVRDKTGSNGEDARNDIAVLWPVAGGAPWVLTAYLQAGAISYEQRATVLAQVGRIADRLIG.

Residues 1–35 (MLARRRFLQFSGAAVASSLALPLLARAAGKTAASA) constitute a signal peptide (tat-type signal). The Acyl-ester intermediate role is filled by Ser-83. 247-249 (KTG) is a binding site for substrate.

It belongs to the class-A beta-lactamase family. In terms of processing, predicted to be exported by the Tat system. The position of the signal peptide cleavage has not been experimentally proven.

The catalysed reaction is a beta-lactam + H2O = a substituted beta-amino acid. The protein is Beta-lactamase L2 of Stenotrophomonas maltophilia (Pseudomonas maltophilia).